We begin with the raw amino-acid sequence, 407 residues long: Spore germination protein KC (407 aa).

An N-terminal signal peptide occupies residues 1–20 (MVRKCLLAVLMLLSVIVLPG). A lipid anchor (N-palmitoyl cysteine) is attached at cysteine 21. Cysteine 21 is lipidated: S-diacylglycerol cysteine.

This sequence belongs to the GerABKC lipoprotein family.

It is found in the cell membrane. Its function is as follows. Involved in the germination response to the combination of glucose, fructose, L-asparagine, and KCl. The chain is Spore germination protein KC (gerKC) from Bacillus subtilis (strain 168).